Reading from the N-terminus, the 432-residue chain is Adenylosuccinate synthetase (432 aa).

GTP is bound by residues G13–K19 and G41–T43. D14 (proton acceptor) is an active-site residue. Mg(2+)-binding residues include D14 and G41. IMP contacts are provided by residues D14–K17, N39–H42, T130, R144, Q225, T240, and R304. The active-site Proton donor is the H42. A300–R306 is a binding site for substrate. GTP contacts are provided by residues R306, K332–D334, and S415–G417.

The protein belongs to the adenylosuccinate synthetase family. In terms of assembly, homodimer. It depends on Mg(2+) as a cofactor.

The protein localises to the cytoplasm. The enzyme catalyses IMP + L-aspartate + GTP = N(6)-(1,2-dicarboxyethyl)-AMP + GDP + phosphate + 2 H(+). Its pathway is purine metabolism; AMP biosynthesis via de novo pathway; AMP from IMP: step 1/2. In terms of biological role, plays an important role in the de novo pathway of purine nucleotide biosynthesis. Catalyzes the first committed step in the biosynthesis of AMP from IMP. The chain is Adenylosuccinate synthetase from Salmonella paratyphi C (strain RKS4594).